The following is a 454-amino-acid chain: Bifunctional protein GlmU (454 aa).

The segment at 1-227 (MTQLSVVILA…FMEVEGANNR (227 aa)) is pyrophosphorylase. Residues 9–12 (LAAG), lysine 23, glutamine 74, 79–80 (GT), 101–103 (YGD), glycine 138, glutamate 152, asparagine 167, and asparagine 225 each bind UDP-N-acetyl-alpha-D-glucosamine. Aspartate 103 is a Mg(2+) binding site. Residue asparagine 225 coordinates Mg(2+). The interval 228–248 (LQLAALERFYQKTQAEKLLLA) is linker. The N-acetyltransferase stretch occupies residues 249–454 (GVRLIDQARF…QGWQRPTKKK (206 aa)). UDP-N-acetyl-alpha-D-glucosamine is bound by residues arginine 331 and lysine 349. Histidine 361 (proton acceptor) is an active-site residue. UDP-N-acetyl-alpha-D-glucosamine contacts are provided by tyrosine 364 and asparagine 375. Residues alanine 378, 384 to 385 (NY), serine 403, alanine 421, and arginine 438 contribute to the acetyl-CoA site.

The protein in the N-terminal section; belongs to the N-acetylglucosamine-1-phosphate uridyltransferase family. In the C-terminal section; belongs to the transferase hexapeptide repeat family. Homotrimer. Requires Mg(2+) as cofactor.

It is found in the cytoplasm. The enzyme catalyses alpha-D-glucosamine 1-phosphate + acetyl-CoA = N-acetyl-alpha-D-glucosamine 1-phosphate + CoA + H(+). It carries out the reaction N-acetyl-alpha-D-glucosamine 1-phosphate + UTP + H(+) = UDP-N-acetyl-alpha-D-glucosamine + diphosphate. It functions in the pathway nucleotide-sugar biosynthesis; UDP-N-acetyl-alpha-D-glucosamine biosynthesis; N-acetyl-alpha-D-glucosamine 1-phosphate from alpha-D-glucosamine 6-phosphate (route II): step 2/2. The protein operates within nucleotide-sugar biosynthesis; UDP-N-acetyl-alpha-D-glucosamine biosynthesis; UDP-N-acetyl-alpha-D-glucosamine from N-acetyl-alpha-D-glucosamine 1-phosphate: step 1/1. Its pathway is bacterial outer membrane biogenesis; LPS lipid A biosynthesis. In terms of biological role, catalyzes the last two sequential reactions in the de novo biosynthetic pathway for UDP-N-acetylglucosamine (UDP-GlcNAc). The C-terminal domain catalyzes the transfer of acetyl group from acetyl coenzyme A to glucosamine-1-phosphate (GlcN-1-P) to produce N-acetylglucosamine-1-phosphate (GlcNAc-1-P), which is converted into UDP-GlcNAc by the transfer of uridine 5-monophosphate (from uridine 5-triphosphate), a reaction catalyzed by the N-terminal domain. The polypeptide is Bifunctional protein GlmU (Actinobacillus pleuropneumoniae serotype 7 (strain AP76)).